A 504-amino-acid polypeptide reads, in one-letter code: Deoxyguanosinetriphosphate triphosphohydrolase (504 aa).

Residues 66 to 273 (RLTHSLEVQQ…MEAADDISYC (208 aa)) enclose the HD domain.

It belongs to the dGTPase family. Type 1 subfamily. Homotetramer. Mg(2+) serves as cofactor.

It catalyses the reaction dGTP + H2O = 2'-deoxyguanosine + triphosphate + H(+). Its function is as follows. dGTPase preferentially hydrolyzes dGTP over the other canonical NTPs. The chain is Deoxyguanosinetriphosphate triphosphohydrolase from Klebsiella pneumoniae (strain 342).